Reading from the N-terminus, the 261-residue chain is tRNA pseudouridine synthase A (261 aa).

Asp-51 acts as the Nucleophile in catalysis. Residue Tyr-109 participates in substrate binding.

This sequence belongs to the tRNA pseudouridine synthase TruA family. In terms of assembly, homodimer.

The enzyme catalyses uridine(38/39/40) in tRNA = pseudouridine(38/39/40) in tRNA. In terms of biological role, formation of pseudouridine at positions 38, 39 and 40 in the anticodon stem and loop of transfer RNAs. In Methylobacillus flagellatus (strain ATCC 51484 / DSM 6875 / VKM B-1610 / KT), this protein is tRNA pseudouridine synthase A.